A 227-amino-acid polypeptide reads, in one-letter code: Cytochrome c oxidase subunit 2 (227 aa).

The Mitochondrial intermembrane segment spans residues 1 to 14 (MAYPFQLGFQDATS). Residues 15-45 (PIMEELLHFHDHTLMIVFLISSLVLYIISLM) traverse the membrane as a helical segment. Residues 46–59 (LTTKLTHTSTMDAQ) are Mitochondrial matrix-facing. Residues 60–87 (EVETIWTILPAIILILIALPSLRILYMM) traverse the membrane as a helical segment. At 88-227 (DEINNPSLTV…YFEKWSASML (140 aa)) the chain is on the mitochondrial intermembrane side. Cu cation-binding residues include His-161, Cys-196, Glu-198, Cys-200, His-204, and Met-207. Glu-198 provides a ligand contact to Mg(2+). A Phosphotyrosine modification is found at Tyr-218.

The protein belongs to the cytochrome c oxidase subunit 2 family. In terms of assembly, component of the cytochrome c oxidase (complex IV, CIV), a multisubunit enzyme composed of 14 subunits. The complex is composed of a catalytic core of 3 subunits MT-CO1, MT-CO2 and MT-CO3, encoded in the mitochondrial DNA, and 11 supernumerary subunits COX4I, COX5A, COX5B, COX6A, COX6B, COX6C, COX7A, COX7B, COX7C, COX8 and NDUFA4, which are encoded in the nuclear genome. The complex exists as a monomer or a dimer and forms supercomplexes (SCs) in the inner mitochondrial membrane with NADH-ubiquinone oxidoreductase (complex I, CI) and ubiquinol-cytochrome c oxidoreductase (cytochrome b-c1 complex, complex III, CIII), resulting in different assemblies (supercomplex SCI(1)III(2)IV(1) and megacomplex MCI(2)III(2)IV(2)). Found in a complex with TMEM177, COA6, COX18, COX20, SCO1 and SCO2. Interacts with TMEM177 in a COX20-dependent manner. Interacts with COX20. Interacts with COX16. Cu cation serves as cofactor.

It is found in the mitochondrion inner membrane. The enzyme catalyses 4 Fe(II)-[cytochrome c] + O2 + 8 H(+)(in) = 4 Fe(III)-[cytochrome c] + 2 H2O + 4 H(+)(out). Functionally, component of the cytochrome c oxidase, the last enzyme in the mitochondrial electron transport chain which drives oxidative phosphorylation. The respiratory chain contains 3 multisubunit complexes succinate dehydrogenase (complex II, CII), ubiquinol-cytochrome c oxidoreductase (cytochrome b-c1 complex, complex III, CIII) and cytochrome c oxidase (complex IV, CIV), that cooperate to transfer electrons derived from NADH and succinate to molecular oxygen, creating an electrochemical gradient over the inner membrane that drives transmembrane transport and the ATP synthase. Cytochrome c oxidase is the component of the respiratory chain that catalyzes the reduction of oxygen to water. Electrons originating from reduced cytochrome c in the intermembrane space (IMS) are transferred via the dinuclear copper A center (CU(A)) of subunit 2 and heme A of subunit 1 to the active site in subunit 1, a binuclear center (BNC) formed by heme A3 and copper B (CU(B)). The BNC reduces molecular oxygen to 2 water molecules using 4 electrons from cytochrome c in the IMS and 4 protons from the mitochondrial matrix. The polypeptide is Cytochrome c oxidase subunit 2 (MT-CO2) (Felis catus (Cat)).